Reading from the N-terminus, the 246-residue chain is O-antigen export system ATP-binding protein RfbB (246 aa).

An ABC transporter domain is found at Ser22–Ala246. Gly63–Ser70 lines the ATP pocket.

The protein belongs to the ABC transporter superfamily.

Its subcellular location is the cell inner membrane. Functionally, may form an ATP-driven O-antigen export apparatus, in association with RfbA. This is O-antigen export system ATP-binding protein RfbB (rfbB) from Klebsiella pneumoniae.